Reading from the N-terminus, the 475-residue chain is Sulfate adenylyltransferase subunit 1 (475 aa).

Residues 25 to 239 enclose the tr-type G domain; it reads KSLLRFLTCG…EVLETVEIQR (215 aa). A G1 region spans residues 34–41; sequence GSVDDGKS. 34–41 provides a ligand contact to GTP; it reads GSVDDGKS. Residues 92 to 96 form a G2 region; that stretch reads GITID. The tract at residues 113–116 is G3; sequence DTPG. GTP is bound by residues 113–117 and 168–171; these read DTPGH and NKMD. A G4 region spans residues 168 to 171; it reads NKMD. A G5 region spans residues 206–208; sequence SAL.

It belongs to the TRAFAC class translation factor GTPase superfamily. Classic translation factor GTPase family. CysN/NodQ subfamily. In terms of assembly, heterodimer composed of CysD, the smaller subunit, and CysN.

It carries out the reaction sulfate + ATP + H(+) = adenosine 5'-phosphosulfate + diphosphate. It functions in the pathway sulfur metabolism; hydrogen sulfide biosynthesis; sulfite from sulfate: step 1/3. In terms of biological role, with CysD forms the ATP sulfurylase (ATPS) that catalyzes the adenylation of sulfate producing adenosine 5'-phosphosulfate (APS) and diphosphate, the first enzymatic step in sulfur assimilation pathway. APS synthesis involves the formation of a high-energy phosphoric-sulfuric acid anhydride bond driven by GTP hydrolysis by CysN coupled to ATP hydrolysis by CysD. This Escherichia coli O139:H28 (strain E24377A / ETEC) protein is Sulfate adenylyltransferase subunit 1.